Reading from the N-terminus, the 78-residue chain is Translational regulator CsrA (78 aa).

It belongs to the CsrA/RsmA family. Homodimer; the beta-strands of each monomer intercalate to form a hydrophobic core, while the alpha-helices form wings that extend away from the core.

It localises to the cytoplasm. Functionally, a translational regulator that binds mRNA to regulate translation initiation and/or mRNA stability. Usually binds in the 5'-UTR at or near the Shine-Dalgarno sequence preventing ribosome-binding, thus repressing translation. Its main target seems to be the major flagellin gene, while its function is anatagonized by FliW. This Borrelia turicatae (strain 91E135) protein is Translational regulator CsrA.